We begin with the raw amino-acid sequence, 185 residues long: NEDD8-conjugating enzyme UBE2F (185 aa).

Methionine 1 carries the N-acetylmethionine modification. Residues 1 to 29 (MLTLASKLKRDDGLKGSRASATASDSTRR) form an interaction with UBA3 region. The region spanning 32–185 (VRDRLLVKEV…VEDYIKRYAR (154 aa)) is the UBC core domain. Cysteine 116 serves as the catalytic Glycyl thioester intermediate.

The protein belongs to the ubiquitin-conjugating enzyme family. UBE2F subfamily. Interacts with UBA3 and RBX2. Interacts (N-terminally acetylated form) with (via DCUN1 domain) DCUN1D1, DCUN1D2, DCUN1D3, DCUN1D4 and DCUN1D5. The acetylation of Met-1 increases affinity for DCUN1D3 by about 2 orders of magnitude and is crucial for NEDD8 transfer to cullins.

It carries out the reaction [E1 NEDD8-activating enzyme]-S-[NEDD8 protein]-yl-L-cysteine + [E2 NEDD8-conjugating enzyme]-L-cysteine = [E1 NEDD8-activating enzyme]-L-cysteine + [E2 NEDD8-conjugating enzyme]-S-[NEDD8-protein]-yl-L-cysteine.. It functions in the pathway protein modification; protein neddylation. Accepts the ubiquitin-like protein NEDD8 from the UBA3-NAE1 E1 complex and catalyzes its covalent attachment to other proteins. Together with the E3 ubiquitin ligase RNF7/RBX2, specifically neddylates cullin-5 (CUL5). Does not neddylate CUL1, CUL2, CUL3, CUL4A or CUL4B. Mediates neddylation of the CUL9-RBX1 complex. This is NEDD8-conjugating enzyme UBE2F (UBE2F) from Bos taurus (Bovine).